Here is a 75-residue protein sequence, read N- to C-terminus: Large ribosomal subunit protein uL29 (75 aa).

This sequence belongs to the universal ribosomal protein uL29 family.

This chain is Large ribosomal subunit protein uL29, found in Nostoc punctiforme (strain ATCC 29133 / PCC 73102).